The sequence spans 486 residues: ATP synthase subunit beta (486 aa).

Residue 164–171 coordinates ATP; the sequence is GGAGVGKT.

The protein belongs to the ATPase alpha/beta chains family. In terms of assembly, F-type ATPases have 2 components, CF(1) - the catalytic core - and CF(0) - the membrane proton channel. CF(1) has five subunits: alpha(3), beta(3), gamma(1), delta(1), epsilon(1). CF(0) has four main subunits: a(1), b(1), b'(1) and c(9-12).

Its subcellular location is the cellular thylakoid membrane. It carries out the reaction ATP + H2O + 4 H(+)(in) = ADP + phosphate + 5 H(+)(out). Produces ATP from ADP in the presence of a proton gradient across the membrane. The catalytic sites are hosted primarily by the beta subunits. The sequence is that of ATP synthase subunit beta from Prochlorococcus marinus (strain AS9601).